A 250-amino-acid polypeptide reads, in one-letter code: 2,3-bisphosphoglycerate-dependent phosphoglycerate mutase (250 aa).

Residues 8–15, 21–22, Arg-60, 87–90, Lys-98, 114–115, and 183–184 each bind substrate; these read RHGESQWN, TG, ERHY, RR, and GN. Catalysis depends on His-9, which acts as the Tele-phosphohistidine intermediate. Glu-87 serves as the catalytic Proton donor/acceptor.

It belongs to the phosphoglycerate mutase family. BPG-dependent PGAM subfamily. Homodimer.

The enzyme catalyses (2R)-2-phosphoglycerate = (2R)-3-phosphoglycerate. It functions in the pathway carbohydrate degradation; glycolysis; pyruvate from D-glyceraldehyde 3-phosphate: step 3/5. In terms of biological role, catalyzes the interconversion of 2-phosphoglycerate and 3-phosphoglycerate. The chain is 2,3-bisphosphoglycerate-dependent phosphoglycerate mutase from Bordetella avium (strain 197N).